The sequence spans 1205 residues: ATP-dependent DNA helicase MER3 homolog (1205 aa).

The Helicase ATP-binding domain maps to 41–236; it reads PACFLSDVNM…WLAVPSEGIK (196 aa). An ATP-binding site is contributed by 54–61; it reads APTGSGKT. Positions 172-175 match the DEAH box motif; that stretch reads DEVH. A Helicase C-terminal domain is found at 266–467; that stretch reads RLQSFIFDIL…CAVEHLNAEI (202 aa). The region spanning 541 to 852 is the SEC63 domain; the sequence is PLEPGRLMTK…FEEYVGLDIH (312 aa). Residues 1075 to 1091 are compositionally biased toward polar residues; it reads QKSEILNRTQGKNSTQL. The disordered stretch occupies residues 1075–1131; sequence QKSEILNRTQGKNSTQLAGKKAFEKSKTPDENSLHFVGKRDSSSEKSKALSKTPDEN. Residues 1095–1122 are compositionally biased toward basic and acidic residues; it reads KAFEKSKTPDENSLHFVGKRDSSSEKSK.

This sequence belongs to the helicase family. SKI2 subfamily. In terms of tissue distribution, transcribed preferentially in early stages of meiocyte development and during meiosis in young flowers.

It localises to the nucleus. It is found in the chromosome. It carries out the reaction Couples ATP hydrolysis with the unwinding of duplex DNA by translocating in the 3'-5' direction.. The catalysed reaction is ATP + H2O = ADP + phosphate + H(+). In terms of biological role, DNA helicase required for crossover formation, complete synapsis of homologous chromosomes and bivalent formation during meiosis. Is specific to recombination events resulting in interference-sensitive crossovers (class I meiotic crossover). Works cooperatively with ZIP4 to promote crossovers. The protein is ATP-dependent DNA helicase MER3 homolog of Oryza sativa subsp. japonica (Rice).